We begin with the raw amino-acid sequence, 359 residues long: Dual-specificity RNA methyltransferase RlmN (359 aa).

Glu102 serves as the catalytic Proton acceptor. The 244-residue stretch at 108–351 (EKKRATLCIS…IRKNRGSDIQ (244 aa)) folds into the Radical SAM core domain. Residues Cys115 and Cys354 are joined by a disulfide bond. [4Fe-4S] cluster contacts are provided by Cys122, Cys126, and Cys129. Residues 178–179 (GE), Ser210, 232–234 (SLH), and Asn311 each bind S-adenosyl-L-methionine. Cys354 serves as the catalytic S-methylcysteine intermediate.

Belongs to the radical SAM superfamily. RlmN family. It depends on [4Fe-4S] cluster as a cofactor.

It is found in the cytoplasm. The catalysed reaction is adenosine(2503) in 23S rRNA + 2 reduced [2Fe-2S]-[ferredoxin] + 2 S-adenosyl-L-methionine = 2-methyladenosine(2503) in 23S rRNA + 5'-deoxyadenosine + L-methionine + 2 oxidized [2Fe-2S]-[ferredoxin] + S-adenosyl-L-homocysteine. The enzyme catalyses adenosine(37) in tRNA + 2 reduced [2Fe-2S]-[ferredoxin] + 2 S-adenosyl-L-methionine = 2-methyladenosine(37) in tRNA + 5'-deoxyadenosine + L-methionine + 2 oxidized [2Fe-2S]-[ferredoxin] + S-adenosyl-L-homocysteine. Functionally, specifically methylates position 2 of adenine 2503 in 23S rRNA and position 2 of adenine 37 in tRNAs. m2A2503 modification seems to play a crucial role in the proofreading step occurring at the peptidyl transferase center and thus would serve to optimize ribosomal fidelity. The protein is Dual-specificity RNA methyltransferase RlmN of Buchnera aphidicola subsp. Cinara cedri (strain Cc).